The primary structure comprises 82 residues: Small ribosomal subunit protein bS16 (82 aa).

Belongs to the bacterial ribosomal protein bS16 family.

The protein is Small ribosomal subunit protein bS16 of Aeromonas hydrophila subsp. hydrophila (strain ATCC 7966 / DSM 30187 / BCRC 13018 / CCUG 14551 / JCM 1027 / KCTC 2358 / NCIMB 9240 / NCTC 8049).